Here is a 424-residue protein sequence, read N- to C-terminus: MHLNSSVQQGAPSEPGAQPFPHPQFGLETMLLALSLSNGSGNSSESILEPNSNLDVNTDIYSKVLVTAVYLALFVVGTVGNSVTAFTLARKKSLQSLQSTVHYHLGSLALSDLLILLLAMPVELYNFIWVHHPWAFGDAGCRGYYFLRDACTYATALNVASLSVERYLAICHPFKAKTLMSRSRTKKFISAIWLASALLAVPMLFTMGLQNRSADGQHPGGLVCTPTVDTATVKVVIQVNTFMSFLFPMLIISILNTVIANKLTVMVHQAAEQGRGVCTVGTHNSLEHSTFNMSIEPGRVQALRHGVLVLRAVVIAFVVCWLPYHVRRLMFCYISDEQWTTFLFDFYHYFYMLTNALFYVSSAINPILYNLVSANFRQVFLSTLACLCPGWRRRRKKRPTFSRKPNSMSSNHAFSTSATRETLY.

At 1–67 (MHLNSSVQQG…TDIYSKVLVT (67 aa)) the chain is on the extracellular side. Residues N4, N38, and N42 are each glycosylated (N-linked (GlcNAc...) asparagine). The chain crosses the membrane as a helical span at residues 68-88 (AVYLALFVVGTVGNSVTAFTL). Topologically, residues 89-102 (ARKKSLQSLQSTVH) are cytoplasmic. The chain crosses the membrane as a helical span at residues 103–122 (YHLGSLALSDLLILLLAMPV). Residues 123–142 (ELYNFIWVHHPWAFGDAGCR) lie on the Extracellular side of the membrane. An intrachain disulfide couples C141 to C224. A helical transmembrane segment spans residues 143-164 (GYYFLRDACTYATALNVASLSV). At 165–184 (ERYLAICHPFKAKTLMSRSR) the chain is on the cytoplasmic side. A helical membrane pass occupies residues 185–205 (TKKFISAIWLASALLAVPMLF). Topologically, residues 206-234 (TMGLQNRSADGQHPGGLVCTPTVDTATVK) are extracellular. N211 carries an N-linked (GlcNAc...) asparagine glycan. A helical transmembrane segment spans residues 235–259 (VVIQVNTFMSFLFPMLIISILNTVI). Topologically, residues 260–308 (ANKLTVMVHQAAEQGRGVCTVGTHNSLEHSTFNMSIEPGRVQALRHGVL) are cytoplasmic. The helical transmembrane segment at 309–330 (VLRAVVIAFVVCWLPYHVRRLM) threads the bilayer. Residues 326–349 (VRRLMFCYISDEQWTTFLFDFYHY) form a neurotensin binding region. At 331 to 348 (FCYISDEQWTTFLFDFYH) the chain is on the extracellular side. The helical transmembrane segment at 349–369 (YFYMLTNALFYVSSAINPILY) threads the bilayer. Residues 370–424 (NLVSANFRQVFLSTLACLCPGWRRRRKKRPTFSRKPNSMSSNHAFSTSATRETLY) are Cytoplasmic-facing. Residues C386 and C388 are each lipidated (S-palmitoyl cysteine). The tract at residues 398–424 (RPTFSRKPNSMSSNHAFSTSATRETLY) is disordered. The span at 403–424 (RKPNSMSSNHAFSTSATRETLY) shows a compositional bias: polar residues.

This sequence belongs to the G-protein coupled receptor 1 family. Neurotensin receptor subfamily. NTSR1 sub-subfamily. Interacts (palmitoylated form) with GNA11. N-glycosylated. Post-translationally, palmitoylated; this is required for normal localization at membrane rafts and normal GNA11-mediated activation of down-stream signaling cascades. The palmitoylation level increases in response to neurotensin treatment.

The protein resides in the cell membrane. It is found in the membrane raft. Functionally, G-protein coupled receptor for the tridecapeptide neurotensin (NTS). Signaling is effected via G proteins that activate a phosphatidylinositol-calcium second messenger system. Signaling leads to the activation of downstream MAP kinases and protects cells against apoptosis. In Mus musculus (Mouse), this protein is Neurotensin receptor type 1 (Ntsr1).